We begin with the raw amino-acid sequence, 152 residues long: Lipoprotein signal peptidase (152 aa).

A run of 3 helical transmembrane segments spans residues 5-25 (LFVL…FWIV), 61-81 (WFFV…LATH), and 84-104 (LNIW…GNFI). Catalysis depends on residues D114 and D130. The chain crosses the membrane as a helical span at residues 125-145 (IFNVADSYLTVGVILLLICLW).

This sequence belongs to the peptidase A8 family.

It localises to the cell membrane. The enzyme catalyses Release of signal peptides from bacterial membrane prolipoproteins. Hydrolyzes -Xaa-Yaa-Zaa-|-(S,diacylglyceryl)Cys-, in which Xaa is hydrophobic (preferably Leu), and Yaa (Ala or Ser) and Zaa (Gly or Ala) have small, neutral side chains.. It participates in protein modification; lipoprotein biosynthesis (signal peptide cleavage). In terms of biological role, this protein specifically catalyzes the removal of signal peptides from prolipoproteins. This chain is Lipoprotein signal peptidase, found in Streptococcus pyogenes serotype M1.